The following is a 1306-amino-acid chain: DNA-directed RNA polymerase subunit beta' (1306 aa).

Residues cysteine 214, cysteine 285, cysteine 292, and cysteine 295 each contribute to the Zn(2+) site. Disordered stretches follow at residues 1234–1263 (LDNGEDSLNNRYGQGERDNNNSDKKPPNRL) and 1281–1306 (IARAYTEADPPWSVESKQEKDDDDDK). A compositionally biased stretch (basic and acidic residues) spans 1247–1259 (QGERDNNNSDKKP).

Belongs to the RNA polymerase beta' chain family. RpoC2 subfamily. In terms of assembly, in cyanobacteria the RNAP catalytic core is composed of 2 alpha, 1 beta, 1 beta', 1 gamma and 1 omega subunit. When a sigma factor is associated with the core the holoenzyme is formed, which can initiate transcription. The cofactor is Zn(2+).

The catalysed reaction is RNA(n) + a ribonucleoside 5'-triphosphate = RNA(n+1) + diphosphate. DNA-dependent RNA polymerase catalyzes the transcription of DNA into RNA using the four ribonucleoside triphosphates as substrates. This is DNA-directed RNA polymerase subunit beta' from Crocosphaera subtropica (strain ATCC 51142 / BH68) (Cyanothece sp. (strain ATCC 51142)).